Here is a 1019-residue protein sequence, read N- to C-terminus: Enteropeptidase (1019 aa).

A lipid anchor (N-myristoyl glycine) is attached at Gly2. Residues 2–18 (GSKRGISSRHHSLSSYE) are Cytoplasmic-facing. The helical; Signal-anchor for type II membrane protein transmembrane segment at 19–47 (IMFAALFAILVVLCAGLIAVSCLTIKESQ) threads the bilayer. Residues 48 to 1019 (RGAALGQSHE…FTEWIQSFLH (972 aa)) are Extracellular-facing. Residues 54-169 (QSHEARATFK…NSVDILDKLT (116 aa)) enclose the SEA domain. N-linked (GlcNAc...) asparagine glycans are attached at residues Asn116, Asn147, and Asn179. The LDL-receptor class A 1 domain maps to 182–223 (IECLPGSSPCTDALTCIKADLFCDGEVNCPDGSDEDNKMCAT). Disulfide bonds link Cys184–Cys197, Cys191–Cys210, Cys204–Cys221, and Cys225–Cys253. The CUB 1 domain occupies 225 to 334 (CDGRFLLTGS…VGFNATYTAF (110 aa)). 8 N-linked (GlcNAc...) asparagine glycosylation sites follow: Asn328, Asn335, Asn388, Asn440, Asn470, Asn503, Asn534, and Asn630. Residues 342 to 504 (YEKINCNFED…ISLTYGICNG (163 aa)) form the MAM domain. A disulfide bond links Cys524 and Cys552. A CUB 2 domain is found at 524 to 634 (CGGPFELWEP…GGFKANFTTG (111 aa)). In terms of domain architecture, LDL-receptor class A 2 spans 641–679 (EPCKADHFQCKNGECVPLVNLCDGHLHCEDGSDEADCVR). 3 disulfides stabilise this stretch: Cys643–Cys655, Cys650–Cys668, and Cys662–Cys677. The SRCR domain maps to 678–771 (VRFFNGTTNN…LIRLQCNHKS (94 aa)). Asn682, Asn706, and Asn725 each carry an N-linked (GlcNAc...) asparagine glycan. 3 disulfide bridges follow: Cys757/Cys767, Cys772/Cys896, and Cys810/Cys826. The Peptidase S1 domain occupies 785–1019 (IVGGSNAKEG…FTEWIQSFLH (235 aa)). His825 (charge relay system) is an active-site residue. Asn848 carries an N-linked (GlcNAc...) asparagine glycan. Asp876 serves as the catalytic Charge relay system. Residues Asn887, Asn909, and Asn949 are each glycosylated (N-linked (GlcNAc...) asparagine). Cystine bridges form between Cys910-Cys977, Cys941-Cys956, and Cys967-Cys995. Ser971 (charge relay system) is an active-site residue.

This sequence belongs to the peptidase S1 family. As to quaternary structure, heterodimer of a catalytic (light) chain and a multidomain (heavy) chain linked by a disulfide bond. In terms of processing, the chains are derived from a single precursor that is cleaved by a trypsin-like protease. In terms of tissue distribution, intestinal brush border.

It localises to the membrane. The enzyme catalyses Activation of trypsinogen by selective cleavage of 6-Lys-|-Ile-7 bond.. In terms of biological role, responsible for initiating activation of pancreatic proteolytic proenzymes (trypsin, chymotrypsin and carboxypeptidase A). It catalyzes the conversion of trypsinogen to trypsin which in turn activates other proenzymes including chymotrypsinogen, procarboxypeptidases, and proelastases. The polypeptide is Enteropeptidase (TMPRSS15) (Homo sapiens (Human)).